The sequence spans 64 residues: Large ribosomal subunit protein bL28 (64 aa).

The segment at 1–23 is disordered; that stretch reads MARKDQISHRGPLSGNNRSHALN.

This sequence belongs to the bacterial ribosomal protein bL28 family.

In Mesomycoplasma hyopneumoniae (strain 232) (Mycoplasma hyopneumoniae), this protein is Large ribosomal subunit protein bL28.